Reading from the N-terminus, the 1222-residue chain is MLFNINEKGEPLVISFAPFLSPEAIKYLQENERCSDQSQKRTAQQIEAIYTSGQNILVSASAGSGKTFVMVERILDKILRGVSIDRLFISTFTVKAATELRERIENKLYSQIAQTTDFQMKVYLTEQLQSLCQADIGTMDAFAQKVVSRYGYSIGISSQFRIMQDKAEQDVLKQEVFSKLFSEFMNQKEAPVFRALVKNFSGNCKDTSAFRELVYTCYSFSQSTENPKIWLQENFLSAAKTYQRLEDIPDHDIELLLLAMQDTANQLRDVTDMEDYGQLTKAGSRSAKYTKHLTIIEKLSDWVRDFKCLYGKAGLDRLIRDVTGLIPSGNDVTVSKVKYPVFKTLHQKLKQFRHLETILMYQKDCFPLLEQLQDFVLAFSEAYLAVKIQESAFEFSDIAHFAIKILEENTDIRQSYQQHYHEVMVDEYQDNNHMQERLLTLLSNGHNRFMVGDIKQSIYRFRQADPQIFNQKFRDYQKKTEQGKVILLKENFRSQSEVLNVSNAVFSHLMDESVGDALYDEQHQLIAGSHAQTVPYLDRRAQLLLYNSDKDDGNAPSDSEGISFSEVTIVAKEIIKLHNDKGVPFEDITLLVSSRTRNDIISHTFNQYGIPIVTDGGQQNYLKSVEVMVMLDTLRTINNPRNDYALVALLRSPMFAFDEDDLARIALQKDNELDKDCLYDKIQRAVIGRGAHPELIHDTLLGKLNIFLKTLKSWRRYAKLGSLYDLIWKIFNDRFYFDFVASQAKAEQAQANLYALALRANQFEKSGYKGLYRFIKMIDKVLETQNDLADVEVAAPKQAVNLMTIHKSKGLQFPYVFILNCDKRFSMTDIHKSFILNRQHGIGIKYLADIKGLLGETTLNSVKVSMETLPYQLNKQELRLATLSEQMRLLYVAMTRAEKKVYFIGKASKSKSQDITDPKKLGKLLSLALREQLLTFQDWLLAIADIFSTEDLYFDVRFIEDSDLTQESVGRLQTPQLLNPDDLKDNRQSETIARALDMLEAVSQLNANYEAAIHLPTVRTPSQLKVTYEPLLEPIGVDIIEKSSRSLSDFTLPHFSKKAKVEASHIGSALHQLMQVLPLSKPINQQTLLDALRGIDSNEEVKTALDLKKIESFFCDTSLGQFFQTYQKHLYREAPFAILKLDPISQEEYVLRGIIDAYFLFDDHIVLVDYKTDKYKQPIELKKRYQQQLELYAEALTQTYKLPVTKRYLVLMGGGKPEIVEV.

The region spanning Gln39–Gln495 is the UvrD-like helicase ATP-binding domain. Ala60–Thr67 contacts ATP. The UvrD-like helicase C-terminal domain occupies Gln524 to Gly810.

Belongs to the helicase family. AddA subfamily. As to quaternary structure, heterodimer of AddA and AddB/RexB. It depends on Mg(2+) as a cofactor.

The enzyme catalyses Couples ATP hydrolysis with the unwinding of duplex DNA by translocating in the 3'-5' direction.. It catalyses the reaction ATP + H2O = ADP + phosphate + H(+). The heterodimer acts as both an ATP-dependent DNA helicase and an ATP-dependent, dual-direction single-stranded exonuclease. Recognizes the chi site generating a DNA molecule suitable for the initiation of homologous recombination. The AddA nuclease domain is required for chi fragment generation; this subunit has the helicase and 3' -&gt; 5' nuclease activities. The protein is ATP-dependent helicase/nuclease subunit A of Streptococcus pyogenes serotype M18 (strain MGAS8232).